A 151-amino-acid polypeptide reads, in one-letter code: Large ribosomal subunit protein bL9 (151 aa).

The protein belongs to the bacterial ribosomal protein bL9 family.

Its function is as follows. Binds to the 23S rRNA. The polypeptide is Large ribosomal subunit protein bL9 (Azoarcus sp. (strain BH72)).